Consider the following 248-residue polypeptide: 14-3-3 protein zeta (248 aa).

It belongs to the 14-3-3 family. Homodimer; homodimerization is not essential for modulating the activity of Slo. Interacts with phosphorylated Slob; the interaction with Slob mediates an indirect interaction with Slo. Interacts with phosphorylated yki. Interacts with hemo; this represses 14-3-3zeta activity which prevents the 14-3-3zeta-mediated activation of phosphoinositide 3-kinase Pi3K68D. This, in turn, inhibits the Pi3K68D-mediated conversion of phosphatidylinositol to phosphatidylinositol-3-phosphate and prevents progression of early endosomes through the maturation process which regulates subsequent steps of phagocytic processing. Interacts with REPTOR (when phosphorylated), this interaction may assist the cytoplasmic retention of REPTOR. As to expression, predominantly expressed in the ventral nerve cord of the embryo, and in the neural tissues of the head. Also found in the region posterior to the morphogenetic furrow of the eye imaginal disk where cells differentiate as photoreceptors.

Its subcellular location is the cytoplasm. It localises to the early endosome. In terms of biological role, required in Raf-dependent cell proliferation and photoreceptor differentiation during eye development. Acts upstream of Raf and downstream of Ras, and is essential for viability. Acts as a negative regulator of the slo calcium channel via its interaction with slo-binding protein slob. Inhibits yki activity by restricting its nuclear localization. Binds to and promotes the activity of phosphoinositide 3-kinase Pi3K68D which converts phosphatidylinositol to phosphatidylinositol-3-phosphate and promotes maturation of early endosomes. The chain is 14-3-3 protein zeta (14-3-3zeta) from Drosophila melanogaster (Fruit fly).